A 3075-amino-acid polypeptide reads, in one-letter code: Lovastatin nonaketide synthase mokA (3075 aa).

Residues 49-488 (NEPIVVVGSG…GTNAHAIIEE (440 aa)) form the Ketosynthase family 3 (KS3) domain. Active-site for beta-ketoacyl synthase activity residues include Cys-222, His-361, and His-408. An acyl and malonyl transferase region spans residues 603–945 (VFTGQGAQWP…AYLWEQFGIP (343 aa)). The active-site For malonyltransferase activity is Ser-697. The N-terminal hotdog fold stretch occupies residues 997–1133 (HLLLGKLSEY…GQLVVTLDEG (137 aa)). Residues 997–1311 (HLLLGKLSEY…FKPFSPPTAS (315 aa)) enclose the PKS/mFAS DH domain. The active-site Proton acceptor; for dehydratase activity is the His-1029. A dehydratase-like region spans residues 1029-1041 (HALQGQVVFPAAG). A C-terminal hotdog fold region spans residues 1156 to 1311 (MNRVNINSFY…FKPFSPPTAS (156 aa)). Residue Asp-1218 is the Proton donor; for dehydratase activity of the active site. Residues 1556–1594 (YDLIIASNVLHATPDLEKTMAHARSLLKPGGQMVILEIT) form a methyltransferase region. The interval 2176-2470 (ALPARIRPID…FKIPERRGKA (295 aa)) is beta-ketoacyl reductase. A Carrier domain is found at 2492–2571 (DQVRQIVIDG…DLADDAAARL (80 aa)). Ser-2531 bears the O-(pantetheine 4'-phosphoryl)serine mark. The segment at 2582–2624 (SEGGAETSDNDTSGPEGTDLSASTTITEPSSADEEDEKQEDDN) is disordered. Over residues 2591–2611 (NDTSGPEGTDLSASTTITEPS) the composition is skewed to polar residues. Over residues 2612 to 2624 (SADEEDEKQEDDN) the composition is skewed to acidic residues. The tract at residues 2633–2989 (PLSLGQEYAW…AETAEPAPLF (357 aa)) is peptide synthetase elongation.

The cofactor is pantetheine 4'-phosphate.

It carries out the reaction holo-[lovastatin nonaketide synthase] + 9 malonyl-CoA + S-adenosyl-L-methionine + 11 NADPH + 19 H(+) = dihydromonacolin L-[lovastatin nonaketide synthase] + S-adenosyl-L-homocysteine + 9 CO2 + 11 NADP(+) + 9 CoA + 6 H2O. The protein operates within polyketide biosynthesis; lovastatin biosynthesis. Nonaketide synthase; part of the gene cluster that mediates the biosynthesis of monakolin K, also known as lovastatin, and which acts as a potent competitive inhibitor of HMG-CoA reductase. Monakolin K biosynthesis is performed in two stages. The first stage is catalyzed by the nonaketide synthase mokA, which belongs to type I polyketide synthases and catalyzes the iterative nine-step formation of the polyketide. This PKS stage is completed by the action of dehydrogenase mokE, which catalyzes the NADPH-dependent reduction of the unsaturated tetra-, penta- and heptaketide intermediates that arise during the mokA-mediated biosynthesis of the nonaketide chain and leads to dihydromonacolin L. Covalently bound dihydromonacolin L is released from mokA by the mokD esterase. Conversion of dihydromonacolin L into monacolin L and then monacolin J is subsequently performed with the participation of molecular oxygen and P450 monoogygenase mokC. Finally, mokF performs the conversion of monacoline J to monacoline K through the addition of the side-chain diketide moiety (2R)-2-methylbutanoate produced by the diketide synthase mokB. In Monascus pilosus (Red mold), this protein is Lovastatin nonaketide synthase mokA.